Consider the following 382-residue polypeptide: MFLKAVVLTLSLVAVTGAQAEVSANQVATVVWDYFSQLSNNAKEAVEHLQKSELTQQLNALFQDKIGQVNTYTDNLQKKLVPFATELHERLRKDSEKLKEEIRKELEELRARLLPHADEVSRKIGDNMHELQQRLGPYAEELRTQVNTHAERLRNQLTAHAQSLETTLRQNVDNLQASLTPYADELKAKIDQNVEELKGHLTPYADELKVKIDQNVEDLRRSLAPYAQDVQEKLNHQLEGLAFQMKKNAEELKAKISANADELRQKLVPVAEVVRGKLRDNTEELQKSLAELSSHLDRQVEEFRRNVGPYGETFNKALLQQVEELRQKLGPYAGDVEDHLSFLEKDLRDKVNSFFSTLEEKENQDMLVAVPELQLTPVPLES.

The first 20 residues, 1-20, serve as a signal peptide directing secretion; that stretch reads MFLKAVVLTLSLVAVTGAQA. 13 tandem repeats follow at residues 33–54, 60–81, 82–103, 115–136, 137–158, 159–180, 181–202, 203–224, 225–246, 247–268, 269–286, 287–308, and 309–330. The tract at residues 33-330 is 13 X 22 AA approximate tandem repeats; it reads DYFSQLSNNA…QVEELRQKLG (298 aa).

It belongs to the apolipoprotein A1/A4/E family. In terms of assembly, homodimer. Post-translationally, phosphorylation sites are present in the extracellular medium.

The protein resides in the secreted. Functionally, may have a role in chylomicrons and VLDL secretion and catabolism. Required for efficient activation of lipoprotein lipase by ApoC-II; potent activator of LCAT. Apoa-IV is a major component of HDL and chylomicrons. This chain is Apolipoprotein A-IV (APOA4), found in Neomonachus schauinslandi (Hawaiian monk seal).